We begin with the raw amino-acid sequence, 358 residues long: Ferredoxin--NADP reductase (358 aa).

Residues aspartate 38, glutamine 46, tyrosine 51, valine 91, phenylalanine 126, aspartate 301, and threonine 341 each contribute to the FAD site.

This sequence belongs to the ferredoxin--NADP reductase type 2 family. In terms of assembly, homodimer. The cofactor is FAD.

It catalyses the reaction 2 reduced [2Fe-2S]-[ferredoxin] + NADP(+) + H(+) = 2 oxidized [2Fe-2S]-[ferredoxin] + NADPH. In Paracidovorax citrulli (strain AAC00-1) (Acidovorax citrulli), this protein is Ferredoxin--NADP reductase.